Consider the following 634-residue polypeptide: Lamin tail domain-containing protein 2 (634 aa).

The segment at 1-44 (MRWLRPAGRRREQESVSGHLGPPAGAPAAPETPTCLPDTTPHPA) is disordered. Residues 106–169 (SHSQEKLLQN…QKSCLLQLAR (64 aa)) are a coiled coil. Residues 228 to 237 (FTNMEPSSKQ) show a composition bias toward polar residues. Disordered stretches follow at residues 228–349 (FTNM…TDPD) and 464–575 (HRIP…PAEA). A compositionally biased stretch (low complexity) spans 276 to 287 (SSSGGADSDSSS). A compositionally biased stretch (polar residues) spans 310-321 (SEQALVQAGSYS). Positions 322–337 (RDSEDLQKTHSPRHGE) are enriched in basic and acidic residues. Residues 350–468 (HWSPELLQSP…EVLSEHRIPR (119 aa)) enclose the LTD domain. Over residues 502–513 (PPRPPRPLRKGR) the composition is skewed to basic residues. Basic and acidic residues predominate over residues 540–550 (HAREGPARPEN).

The chain is Lamin tail domain-containing protein 2 (LMNTD2) from Homo sapiens (Human).